The sequence spans 188 residues: Putative manganese efflux pump MntP (188 aa).

6 consecutive transmembrane segments (helical) span residues F3–A23, I35–V55, F63–M83, W104–F126, M140–F160, and A167–I187.

It belongs to the MntP (TC 9.B.29) family.

The protein localises to the cell inner membrane. Probably functions as a manganese efflux pump. The chain is Putative manganese efflux pump MntP from Neisseria meningitidis serogroup B (strain ATCC BAA-335 / MC58).